The following is a 762-amino-acid chain: MKRRAASPAMSENEVDIAGSLFANHADSDDEVQVHKQQPADLDFGDLLDNGDGSDDGGDAAFIAKQQRSSNRKTGSLQSKSAKKSGGFQAMGLNSNLLRAISRKGFSVPTPIQRKTIPLVLERRDVVGMARTGSGKTAAFVIPMIERLKAHSARVGARAIIMSPSRELALQTLKVVKELGKGTDLKTVLLVGGDSLEEQFGLMAANPDIIIATPGRFLHLKVEMSLNLSSVRYVVFDEADRLFEMGFAAQLTEILHALPPSRQTLLFSATLPSSLVEFARAGLQEPSLIRLDAETKVSPDLESAFFSVKGGEKEGALLHILHDVIKMPLGVPEGIEEETDEQQARKRKRDSERRNRKEKPTEHSTIIFTATKHHVEYIAHLLRHAGFSVSYIYGSLDQTARKIQVDNFRRGRTNILVVTDVAARGIDIPVLANVINYDFPPQPKIFVHRVGRTARAGQRGWAYALLQGTSRPCGGRVRRMRTQRWRMQTRMNQPLRKTKWTSSPEKTNPPGDDEEAWEDEESESELEVTVTSSGKSYQGANILPRPRNLHVLHTIAPPAPAEERGVRAFNSGGTTQFVEAARDAAMDLANDDGAKAFGLPTRSKLRWDKRHSKYVARANDDDGSRGAKMIRGESGVKIAASFQSGRFDKWRRANRLGRLPGVGEAEKANLVRNFSGGGPGGAGAGHYKHRQEKAPKDADKFRDDYHVRKKRVAEAREKRIGKYKDGEGSRRELKSATDIRKARQVQEQKREKNARPAKRAKR.

Disordered stretches follow at residues 20–50 and 65–88; these read SLFA…LLDN and KQQR…SGGF. Positions 41–50 are enriched in low complexity; it reads DLDFGDLLDN. Residues 66–80 are compositionally biased toward polar residues; sequence QQRSSNRKTGSLQSK. A Q motif motif is present at residues 86 to 114; it reads GGFQAMGLNSNLLRAISRKGFSVPTPIQR. The region spanning 117-289 is the Helicase ATP-binding domain; it reads IPLVLERRDV…RAGLQEPSLI (173 aa). Residue 130–137 coordinates ATP; it reads ARTGSGKT. A DEAD box motif is present at residues 237 to 240; the sequence is DEAD. Disordered regions lie at residues 333–363, 491–523, and 671–762; these read EGIE…PTEH, MNQP…EESE, and VRNF…RAKR. The Helicase C-terminal domain occupies 334 to 511; that stretch reads GIEEETDEQQ…SSPEKTNPPG (178 aa). Basic and acidic residues predominate over residues 349–362; that stretch reads RDSERRNRKEKPTE. Acidic residues predominate over residues 511-523; the sequence is GDDEEAWEDEESE. A compositionally biased stretch (gly residues) spans 675–684; the sequence is SGGGPGGAGA. Positions 692-754 are enriched in basic and acidic residues; the sequence is EKAPKDADKF…VQEQKREKNA (63 aa).

This sequence belongs to the DEAD box helicase family. DDX54/DBP10 subfamily.

The protein resides in the nucleus. Its subcellular location is the nucleolus. The catalysed reaction is ATP + H2O = ADP + phosphate + H(+). In terms of biological role, ATP-binding RNA helicase involved in the biogenesis of 60S ribosomal subunits and is required for the normal formation of 25S and 5.8S rRNAs. This is ATP-dependent RNA helicase DBP10 (DBP10) from Chaetomium globosum (strain ATCC 6205 / CBS 148.51 / DSM 1962 / NBRC 6347 / NRRL 1970) (Soil fungus).